Reading from the N-terminus, the 231-residue chain is 7-cyano-7-deazaguanine synthase (231 aa).

ATP is bound at residue 8–18 (FSGGQDSTTCL). Residues Cys188, Cys197, Cys200, and Cys203 each contribute to the Zn(2+) site.

It belongs to the QueC family. Requires Zn(2+) as cofactor.

It carries out the reaction 7-carboxy-7-deazaguanine + NH4(+) + ATP = 7-cyano-7-deazaguanine + ADP + phosphate + H2O + H(+). Its pathway is purine metabolism; 7-cyano-7-deazaguanine biosynthesis. Catalyzes the ATP-dependent conversion of 7-carboxy-7-deazaguanine (CDG) to 7-cyano-7-deazaguanine (preQ(0)). This is 7-cyano-7-deazaguanine synthase from Salmonella agona (strain SL483).